Here is a 93-residue protein sequence, read N- to C-terminus: MDGIKYAVFTDKSIRLLGKNQYTFNVESGSTRTEIKHWVELFFGVKVIAMNSHRLPGKGRRMGPIMGHTMHYRRMIITLQPGYSIPPLRKKRT.

Belongs to the universal ribosomal protein uL23 family. As to quaternary structure, part of the 50S ribosomal subunit.

Its subcellular location is the plastid. The protein localises to the chloroplast. In terms of biological role, binds to 23S rRNA. This chain is Large ribosomal subunit protein uL23cz/uL23cy (rpl23-A), found in Coffea arabica (Arabian coffee).